The sequence spans 677 residues: Protein windpipe (677 aa).

The N-terminal stretch at 1–20 (MERVHLTAWLALFLIVVANA) is a signal peptide. Residues 21 to 451 (TPTPARTPTG…IGKPKDDSSA (431 aa)) lie on the Extracellular side of the membrane. N-linked (GlcNAc...) asparagine glycosylation is found at N53 and N80. 4 LRR repeats span residues 91-116 (LPEL…GLKR), 118-133 (NLKH…RKLP), 134-156 (QHLQ…LTHM), and 158-183 (QLHQ…NWLV). N-linked (GlcNAc...) asparagine glycans are attached at residues N145 and N170. Residues 184-216 (ERIVYMEHPVVCSYPLEFRGRSWLQLKQDEICK) form the LRRCT domain. Disordered regions lie at residues 264–285 (AKKV…SGDL), 298–317 (TVAE…ASPS), and 325–385 (KDED…TVFS). Residues 347–372 (SKVKITSEDDIDSDGKPEESDVRPLE) show a composition bias toward basic and acidic residues. Residues 374–385 (PENSENPDTVFS) are compositionally biased toward polar residues. A helical transmembrane segment spans residues 452 to 472 (IYYLLAVIGLIVVGLVLFVAI). Residues 473–677 (KRCKYDSNAA…EPTHQVINGH (205 aa)) are Cytoplasmic-facing. 2 disordered regions span residues 502 to 523 (LGKP…LIGE) and 539 to 677 (NGEA…INGH). Positions 595 to 607 (AQQQQLAEQNNNE) are enriched in low complexity.

In terms of assembly, interacts with dome; the interaction promotes internalization of dome and its subsequent lysosomal degradation. As to expression, in adult intestine, expressed in both small progenitor cells and large nuclei enterocytes (at protein level). During embryogenesis, restricted to the developing trachea.

Its subcellular location is the cell membrane. Plays a role in negative regulation of the JAK/STAT pathway by binding to the receptor dome and promoting its internalization for subsequent lysosomal degradation, thereby reducing JAK/STAT signaling. The sequence is that of Protein windpipe from Drosophila melanogaster (Fruit fly).